The following is a 193-amino-acid chain: Capsid protein (193 aa).

The protein resides in the virion. The polypeptide is Capsid protein (Apple chlorotic leaf spot virus (isolate apple) (ACLSV)).